Reading from the N-terminus, the 96-residue chain is UPF0358 protein Aflv_1873 (96 aa).

This sequence belongs to the UPF0358 family.

The polypeptide is UPF0358 protein Aflv_1873 (Anoxybacillus flavithermus (strain DSM 21510 / WK1)).